The chain runs to 256 residues: Thiazole synthase (256 aa).

Lys95 acts as the Schiff-base intermediate with DXP in catalysis. 1-deoxy-D-xylulose 5-phosphate is bound by residues Gly156, 182–183 (AG), and 204–205 (NT).

Belongs to the ThiG family. As to quaternary structure, homotetramer. Forms heterodimers with either ThiH or ThiS.

The protein resides in the cytoplasm. The catalysed reaction is [ThiS sulfur-carrier protein]-C-terminal-Gly-aminoethanethioate + 2-iminoacetate + 1-deoxy-D-xylulose 5-phosphate = [ThiS sulfur-carrier protein]-C-terminal Gly-Gly + 2-[(2R,5Z)-2-carboxy-4-methylthiazol-5(2H)-ylidene]ethyl phosphate + 2 H2O + H(+). It functions in the pathway cofactor biosynthesis; thiamine diphosphate biosynthesis. Functionally, catalyzes the rearrangement of 1-deoxy-D-xylulose 5-phosphate (DXP) to produce the thiazole phosphate moiety of thiamine. Sulfur is provided by the thiocarboxylate moiety of the carrier protein ThiS. In vitro, sulfur can be provided by H(2)S. The polypeptide is Thiazole synthase (Shigella dysenteriae serotype 1 (strain Sd197)).